A 312-amino-acid chain; its full sequence is Sulfate adenylyltransferase subunit 2 (312 aa).

Belongs to the PAPS reductase family. CysD subfamily. As to quaternary structure, heterodimer composed of CysD, the smaller subunit, and CysN.

The enzyme catalyses sulfate + ATP + H(+) = adenosine 5'-phosphosulfate + diphosphate. The protein operates within sulfur metabolism; hydrogen sulfide biosynthesis; sulfite from sulfate: step 1/3. With CysN forms the ATP sulfurylase (ATPS) that catalyzes the adenylation of sulfate producing adenosine 5'-phosphosulfate (APS) and diphosphate, the first enzymatic step in sulfur assimilation pathway. APS synthesis involves the formation of a high-energy phosphoric-sulfuric acid anhydride bond driven by GTP hydrolysis by CysN coupled to ATP hydrolysis by CysD. The protein is Sulfate adenylyltransferase subunit 2 of Methylobacterium nodulans (strain LMG 21967 / CNCM I-2342 / ORS 2060).